A 610-amino-acid chain; its full sequence is Propanediol dehydratase-reactivating factor large subunit (610 aa).

11-13 (NSS) serves as a coordination point for ATP. Residues Thr105, Asp166, and Asp183 each coordinate Mg(2+). Residues 459–462 (EEIK), 557–558 (GS), and Arg591 each bind ATP.

This sequence belongs to the DdrA/PduG family. In terms of assembly, forms a heterotetramer PduG(2)/PduH(2). Requires Mg(2+) as cofactor.

The protein resides in the bacterial microcompartment. The enzyme catalyses ATP + H2O = ADP + phosphate + H(+). It functions in the pathway polyol metabolism; 1,2-propanediol degradation. Its function is as follows. Large subunit of the propanediol dehydratase-reactivating factor (DDR), which reactivates suicidally inhibited adenosylcobalamin-dependent propanediol dehydratase (diol dehydratase, DDH) found in the bacterial microcompartment (BMC) dedicated to 1,2-propanediol (1,2-PD) degradation. Reactivates inactivated DDH in the presence of ATP, Mg(2+) and free adenosylcobalamin (AdoCbl), by mediating the exchange of the tightly bound damaged cofactor AdoCbl for a free intact one. This subunit contains the adenosine nucleotide binding site. Expression of a cosmid containing the full 21-gene pdu operon in E.coli allows E.coli to grow on 1,2-propanediol (1,2-PD) with the appearance of bacterial microcompartments (BMC) in its cytoplasm. In terms of biological role, the 1,2-PD-specific bacterial microcompartment (BMC) concentrates low levels of 1,2-PD catabolic enzymes, concentrates volatile reaction intermediates thus enhancing pathway flux and keeps the level of toxic, mutagenic propionaldehyde low. In Citrobacter freundii, this protein is Propanediol dehydratase-reactivating factor large subunit.